A 387-amino-acid chain; its full sequence is MRTLRRLKFMSSPSLSDLGKREPGAAGTDERGTQQRRACANATWNSIHNGVIAVFQRKGLPDQELFILNEGVRQLLKTELGSFFTEYLQNQLLTKGMVILRDKIRFYEGQKLLDSLAETWDFFFSDVLPTLQAIFYPVQGKEPSVRQLALLHFRNTITLSVKLEDALARSHARVPPAIAQMLLVLQGVHESRGVTEDYLRLETLIQKVVSPYLGTYGLYSNEGPCTHSCILEKRFLRRSRSGDILAKNPVVRSKSYNTPLLNPVAEHEAEGTAASGTSIRRHSVSEMTSCPEPQGFVDTPGQGPSGTFRSSPTPHSGPCPSRLYPPAHSPEQGPGHGSPSTSSPETLVDQILESADSDSEGIFIDFGRGSRSSVSDFEAPGGRPSVV.

Interaction with RICTOR stretches follow at residues 10 to 96 (MSSP…LTKG) and 189 to 219 (HESR…YGLY). The interval 13-34 (PSLSDLGKREPGAAGTDERGTQ) is disordered. The span at 18–33 (LGKREPGAAGTDERGT) shows a compositional bias: basic and acidic residues. Position 253 is a phosphoserine (Ser253). The disordered stretch occupies residues 262–387 (NPVAEHEAEG…EAPGGRPSVV (126 aa)). The segment covering 305-314 (SGTFRSSPTP) has biased composition (polar residues). Position 373 is a phosphoserine (Ser373).

The protein belongs to the PROTOR family. Associated component of the mechanistic target of rapamycin complex 2 (mTORC2). Binds directly to MTOR and RICTOR within the TORC2 complex. In terms of tissue distribution, ubiquitously expressed. Expressed at high levels in kidney.

In terms of biological role, associated subunit of mTORC2, which regulates cell growth and survival in response to hormonal signals. mTORC2 is activated by growth factors, but, in contrast to mTORC1, seems to be nutrient-insensitive. mTORC2 seems to function upstream of Rho GTPases to regulate the actin cytoskeleton, probably by activating one or more Rho-type guanine nucleotide exchange factors. PRR5 plays an important role in regulation of PDGFRB expression and in modulation of platelet-derived growth factor signaling. May act as a tumor suppressor in breast cancer. The polypeptide is Proline-rich protein 5 (Mus musculus (Mouse)).